A 394-amino-acid chain; its full sequence is Envelope glycoprotein D (394 aa).

Positions 1–25 (MGGAAARLGAVILFVVIVGLHGVRG) are cleaved as a signal peptide. An interaction with TNFRSF14 region spans residues 26–57 (KYALADASLKMADPNRFRGKDLPVLDQLTDPP). Topologically, residues 26–340 (KYALADASLK…YHPPATPNNM (315 aa)) are virion surface. His64 lines the Zn(2+) pocket. 3 disulfide bridges follow: Cys91/Cys214, Cys131/Cys227, and Cys143/Cys152. Residues Asn119 and Asn146 are each glycosylated (N-linked (GlcNAc...) asparagine; by host). A Zn(2+)-binding site is contributed by Asp240. The segment at 261–305 (LKIAGWHGPKAPYTSTLLPPELSETPNATQPELAPEDPEDSALLE) is profusion. The segment at 275–301 (STLLPPELSETPNATQPELAPEDPEDS) is disordered. The N-linked (GlcNAc...) asparagine; by host glycan is linked to Asn287. A helical membrane pass occupies residues 341-361 (GLIAGAVGGSLLAALVICGIV). At 362–394 (YWMHRRTRKAPKRIRLPHIREDDQPSSHQPLFY) the chain is on the intravirion side.

Belongs to the herpesviridae glycoprotein D family. As to quaternary structure, homodimer. Interacts with host receptor TNFRSF14. Interacts with host receptor NECTIN1. Mutant Rid1 interacts with host receptor NECTIN2. Interacts (via profusion domain) with gB; this interaction occurs in the absence of gH/gL. Interacts (via profusion domain) with gH/gL heterodimer; this interaction occurs in the absence of gB. Associates with the gB-gH/gL-gD complex. Interacts (via C-terminus) with UL11 tegument protein. Interacts (via C-terminus) with VP22 tegument protein; this interaction might be very weak. Interacts with host RSAD2.

It localises to the virion membrane. Its subcellular location is the host Golgi apparatus. Envelope glycoprotein that binds to the host cell entry receptors NECTIN1, TNFRSF14/HVEM and 3-O-sulfated heparan sulfate, promoting the virus entry into host cells. May trigger fusion with host membrane, by recruiting the fusion machinery composed of gB and gH/gL. The chain is Envelope glycoprotein D (gD) from Human herpesvirus 1 (strain KOS) (HHV-1).